Here is a 167-residue protein sequence, read N- to C-terminus: Gametocyte-specific factor 1 (167 aa).

Ser8 is modified (phosphoserine). 2 consecutive CHHC U11-48K-type zinc fingers follow at residues 14–41 and 48–75; these read LLQCPYDKNHQIRACRFPYHLIKCRKNH and LATCPFNARHQVPRAEISHHISSCDDKS. Positions 17, 23, 33, 37, 51, 57, 67, and 71 each coordinate Zn(2+).

It belongs to the UPF0224 (FAM112) family. Expressed abundantly in adult testis, at moderate levels in unfertilized eggs and ovaries and weakly in embryonic stem cells.

It localises to the cytoplasm. Functionally, required for spermatogenesis and is involved in the suppression of retrotransposon transcription in male germ cells. The polypeptide is Gametocyte-specific factor 1 (Mus musculus (Mouse)).